Consider the following 91-residue polypeptide: Transcription factor ILI7 (91 aa).

The bHLH domain maps to 4 to 58 (RSRSRASSAARITDEQIGDLVSKLQALLPEARLRSNDRVPSARVLQETCSYIRSL).

It belongs to the bHLH protein family.

Functionally, atypical and probable non DNA-binding bHLH transcription factor that integrates multiple signaling pathways to regulate cell elongation and plant development. In Oryza sativa subsp. indica (Rice), this protein is Transcription factor ILI7 (ILI7).